Reading from the N-terminus, the 151-residue chain is Ribonuclease H (151 aa).

The RNase H type-1 domain occupies 1-143 (MYKKIEIFTD…CDQLARLAAK (143 aa)). The Mg(2+) site is built by D10, E48, D70, and D135.

It belongs to the RNase H family. Monomer. Mg(2+) serves as cofactor.

It is found in the cytoplasm. It catalyses the reaction Endonucleolytic cleavage to 5'-phosphomonoester.. Its function is as follows. Endonuclease that specifically degrades the RNA of RNA-DNA hybrids. The polypeptide is Ribonuclease H (Blochmanniella pennsylvanica (strain BPEN)).